The primary structure comprises 289 residues: MRQIAFYGKGGIGKSTTQQNTMAAMAEMGRRVMIVGCDPKADSTRLILHSKAQTSVIQLAAEKGSVEDLELDEVLVEGQWGIKCVESGGPEPGVGCAGRGVITSITYLEEAGAYENLDFVTYDVLGDVVCGGFAMPIRQGKAQEIYIVTSGEMMAMYAANNIARGVLKYAHSGGVRLGGLICNSRNTDREDELIIELARRLNTQMIHFIPRNNVVQHAELRRMTVIEYDPENSQANEYRQLAKKIDENDMKTIPTPISMDELEELLIEFGIMEQEDESIIGQKANATVA.

8–15 (GKGGIGKS) is a binding site for ATP. Cysteine 96 is a binding site for [4Fe-4S] cluster. The residue at position 99 (arginine 99) is an ADP-ribosylarginine; by dinitrogenase reductase ADP-ribosyltransferase. Cysteine 130 provides a ligand contact to [4Fe-4S] cluster.

It belongs to the NifH/BchL/ChlL family. As to quaternary structure, homodimer. Requires [4Fe-4S] cluster as cofactor. In terms of processing, the reversible ADP-ribosylation of Arg-99 inactivates the nitrogenase reductase and regulates nitrogenase activity.

The catalysed reaction is N2 + 8 reduced [2Fe-2S]-[ferredoxin] + 16 ATP + 16 H2O = H2 + 8 oxidized [2Fe-2S]-[ferredoxin] + 2 NH4(+) + 16 ADP + 16 phosphate + 6 H(+). Its function is as follows. The key enzymatic reactions in nitrogen fixation are catalyzed by the nitrogenase complex, which has 2 components: the iron protein and the molybdenum-iron protein. This Parafrankia sp. (strain EAN1pec) protein is Nitrogenase iron protein.